The following is a 138-amino-acid chain: Putative pre-16S rRNA nuclease (138 aa).

The protein belongs to the YqgF nuclease family.

It localises to the cytoplasm. In terms of biological role, could be a nuclease involved in processing of the 5'-end of pre-16S rRNA. This is Putative pre-16S rRNA nuclease from Salmonella typhimurium (strain LT2 / SGSC1412 / ATCC 700720).